A 621-amino-acid polypeptide reads, in one-letter code: Chaperone protein DnaK (621 aa).

At threonine 179 the chain carries Phosphothreonine; by autocatalysis. The segment covering 583-605 has biased composition (polar residues); it reads SQVQDTQGAAQGQSQGNPQQTAD. Positions 583–621 are disordered; the sequence is SQVQDTQGAAQGQSQGNPQQTADNRGKVVDAEIVDENKE. Basic and acidic residues predominate over residues 606–621; it reads NRGKVVDAEIVDENKE.

Belongs to the heat shock protein 70 family.

Acts as a chaperone. This is Chaperone protein DnaK from Endomicrobium trichonymphae.